The sequence spans 297 residues: uncharacterized protein (297 aa).

Residues Arg128–Phe156 adopt a coiled-coil conformation.

This is an uncharacterized protein from Bacillus subtilis (strain 168).